The following is a 285-amino-acid chain: 4-diphosphocytidyl-2-C-methyl-D-erythritol kinase (285 aa).

The active site involves K10. 93 to 103 (PIGGGLGGGSS) serves as a coordination point for ATP. The active site involves D135.

The protein belongs to the GHMP kinase family. IspE subfamily.

The enzyme catalyses 4-CDP-2-C-methyl-D-erythritol + ATP = 4-CDP-2-C-methyl-D-erythritol 2-phosphate + ADP + H(+). It participates in isoprenoid biosynthesis; isopentenyl diphosphate biosynthesis via DXP pathway; isopentenyl diphosphate from 1-deoxy-D-xylulose 5-phosphate: step 3/6. Catalyzes the phosphorylation of the position 2 hydroxy group of 4-diphosphocytidyl-2C-methyl-D-erythritol. The chain is 4-diphosphocytidyl-2-C-methyl-D-erythritol kinase from Vesicomyosocius okutanii subsp. Calyptogena okutanii (strain HA).